The chain runs to 501 residues: L-ornithine N(5)-monooxygenase (501 aa).

Over residues 1–16 (MNGTSTTGNGFTNGTN) the composition is skewed to low complexity. Positions 1–40 (MNGTSTTGNGFTNGTNYPVPKLELQPETTSTSPTRAQTHP) are disordered. The segment covering 26-37 (PETTSTSPTRAQ) has biased composition (polar residues). FAD is bound by residues 92–100 (EKQSNFAWH) and glutamine 111. Lysine 116 contributes to the substrate binding site. An FAD-binding site is contributed by valine 177. 263–266 (SGQS) provides a ligand contact to NADP(+). Residues 304-307 (NELF) and asparagine 334 contribute to the substrate site. NADP(+) is bound at residue 334–336 (NYS). 476–478 (SLL) contacts FAD. Serine 479 provides a ligand contact to substrate.

It belongs to the lysine N(6)-hydroxylase/L-ornithine N(5)-oxygenase family. As to quaternary structure, homotetramer. The cofactor is FAD.

The enzyme catalyses L-ornithine + NADPH + O2 = N(5)-hydroxy-L-ornithine + NADP(+) + H2O. The catalysed reaction is L-ornithine + NADH + O2 = N(5)-hydroxy-L-ornithine + NAD(+) + H2O. It functions in the pathway siderophore biosynthesis. Its function is as follows. L-ornithine N(5)-monooxygenase; part of the siderophore biosynthetic pathway. Arthroderma benhamiae produces 2 types of extracellular siderophores, ferrichrome C and ferricrocin. The biosynthesis of these siderophores depends on the hydroxylation of ornithine to N(5)-hydroxyornithine, catalyzed by the monooxygenase sidA. The structure of ferricrocin differs from ferrichrome C only by a serine for alanine substitution and the assembly of both siderophores is suggested to be performed by the nonribosomal peptide synthase (NRPS) sidC. This chain is L-ornithine N(5)-monooxygenase, found in Arthroderma benhamiae (strain ATCC MYA-4681 / CBS 112371) (Trichophyton mentagrophytes).